Reading from the N-terminus, the 415-residue chain is MKRTVILLLDSFGVGGAADADKFIGSLADGSQYDDMGSNTLGHIAEQCAKGNANEGRHGPLTIPNLNKLGFGRACAESSSTFPAGLDPLVEPIAAYGYAKEISTAKDTSSGHWEITGVPVLFDWGYFDKKQNSFPQELLDELVERADLPGYLGNCHASGTTILEDLGEEHLKTGKPIFYTSADSVFQIACHEETFGLERLYKLCELTRELVNKYNIGRVIARPFSGSASSNFMRTGNRHDYSVKPPSPTLLESMKESGGQVVSIGKISDIFAEQGITKATKANGLEALFDASLNELKQAGDQTIIFTNFVNFDADFGHRRNLPGYAAALEYFDKRLPEMLALMTEDDLLVLTADHGCDPTWKGTDHTREHIPAIFYGHAVKPGPIGLRETFADIGQSIADFHKLPALAYGKSIFS.

Asp10, Asp313, His318, Asp354, His355, and His366 together coordinate Mn(2+).

It belongs to the phosphopentomutase family. It depends on Mn(2+) as a cofactor.

Its subcellular location is the cytoplasm. The catalysed reaction is 2-deoxy-alpha-D-ribose 1-phosphate = 2-deoxy-D-ribose 5-phosphate. It catalyses the reaction alpha-D-ribose 1-phosphate = D-ribose 5-phosphate. The protein operates within carbohydrate degradation; 2-deoxy-D-ribose 1-phosphate degradation; D-glyceraldehyde 3-phosphate and acetaldehyde from 2-deoxy-alpha-D-ribose 1-phosphate: step 1/2. Functionally, isomerase that catalyzes the conversion of deoxy-ribose 1-phosphate (dRib-1-P) and ribose 1-phosphate (Rib-1-P) to deoxy-ribose 5-phosphate (dRib-5-P) and ribose 5-phosphate (Rib-5-P), respectively. The sequence is that of Phosphopentomutase from Psychromonas ingrahamii (strain DSM 17664 / CCUG 51855 / 37).